The following is a 238-amino-acid chain: Probable septum site-determining protein MinC (238 aa).

Belongs to the MinC family. Interacts with MinD and FtsZ.

Functionally, cell division inhibitor that blocks the formation of polar Z ring septums. Rapidly oscillates between the poles of the cell to destabilize FtsZ filaments that have formed before they mature into polar Z rings. Prevents FtsZ polymerization. The chain is Probable septum site-determining protein MinC from Blochmanniella floridana.